The following is an 83-amino-acid chain: Exodeoxyribonuclease 7 small subunit (83 aa).

It belongs to the XseB family. In terms of assembly, heterooligomer composed of large and small subunits.

It is found in the cytoplasm. The enzyme catalyses Exonucleolytic cleavage in either 5'- to 3'- or 3'- to 5'-direction to yield nucleoside 5'-phosphates.. In terms of biological role, bidirectionally degrades single-stranded DNA into large acid-insoluble oligonucleotides, which are then degraded further into small acid-soluble oligonucleotides. This chain is Exodeoxyribonuclease 7 small subunit, found in Mesorhizobium japonicum (strain LMG 29417 / CECT 9101 / MAFF 303099) (Mesorhizobium loti (strain MAFF 303099)).